The following is a 333-amino-acid chain: Meiotic recombination protein rec24 (333 aa).

Belongs to the MEI4L family. As to quaternary structure, interacts with Rec7, as part of the meiotic recombination initiation complex.

It localises to the cytoplasm. It is found in the nucleus. Functionally, required for correct meiotic chromosome segregation and recombination. Accessory protein required for Rec12 activity, which is involved in formation of the double-strand breaks (DSBs) that initiate meiotic recombination. This is Meiotic recombination protein rec24 (rec24) from Schizosaccharomyces pombe (strain 972 / ATCC 24843) (Fission yeast).